Consider the following 548-residue polypeptide: Phenylalanine--tRNA ligase beta subunit (548 aa).

In terms of domain architecture, B5 spans 275–350 (LKEDVLETTS…IAYGYNKFSG (76 aa)). Aspartate 328, aspartate 334, glutamate 337, and glutamate 338 together coordinate Mg(2+).

This sequence belongs to the phenylalanyl-tRNA synthetase beta subunit family. Type 2 subfamily. In terms of assembly, tetramer of two alpha and two beta subunits. Mg(2+) is required as a cofactor.

It is found in the cytoplasm. It catalyses the reaction tRNA(Phe) + L-phenylalanine + ATP = L-phenylalanyl-tRNA(Phe) + AMP + diphosphate + H(+). The sequence is that of Phenylalanine--tRNA ligase beta subunit from Methanocaldococcus jannaschii (strain ATCC 43067 / DSM 2661 / JAL-1 / JCM 10045 / NBRC 100440) (Methanococcus jannaschii).